A 209-amino-acid chain; its full sequence is Large ribosomal subunit protein bL25 (209 aa).

Disordered stretches follow at residues M1 to S20 and L190 to S209. The span at K8–S20 shows a compositional bias: basic and acidic residues. The segment covering V192–S209 has biased composition (acidic residues).

This sequence belongs to the bacterial ribosomal protein bL25 family. CTC subfamily. As to quaternary structure, part of the 50S ribosomal subunit; part of the 5S rRNA/L5/L18/L25 subcomplex. Contacts the 5S rRNA. Binds to the 5S rRNA independently of L5 and L18.

Its function is as follows. This is one of the proteins that binds to the 5S RNA in the ribosome where it forms part of the central protuberance. This chain is Large ribosomal subunit protein bL25, found in Bartonella tribocorum (strain CIP 105476 / IBS 506).